We begin with the raw amino-acid sequence, 166 residues long: Large ribosomal subunit protein uL10 (166 aa).

This sequence belongs to the universal ribosomal protein uL10 family. As to quaternary structure, part of the ribosomal stalk of the 50S ribosomal subunit. The N-terminus interacts with L11 and the large rRNA to form the base of the stalk. The C-terminus forms an elongated spine to which L12 dimers bind in a sequential fashion forming a multimeric L10(L12)X complex.

Functionally, forms part of the ribosomal stalk, playing a central role in the interaction of the ribosome with GTP-bound translation factors. In Tropheryma whipplei (strain TW08/27) (Whipple's bacillus), this protein is Large ribosomal subunit protein uL10.